A 261-amino-acid polypeptide reads, in one-letter code: Class II histocompatibility antigen, M alpha chain (261 aa).

Residues 1 to 26 (MEHEQKSGAVLLRLLRLLWLLPHSWA) form the signal peptide. The alpha-1 stretch occupies residues 27-124 (VLEASTPVLW…KLEGQIPVSR (98 aa)). Residues 27–231 (VLEASTPVLW…ALPSDLLENA (205 aa)) lie on the Lumenal side of the membrane. A glycan (N-linked (GlcNAc...) asparagine) is linked at Asn41. Cystine bridges form between Cys50–Cys105 and Cys147–Cys202. An Ig-like C1-type domain is found at 114–215 (PKLEGQIPVS…HEIDRYTAIA (102 aa)). Positions 125-217 (GLSVAEVFTL…IDRYTAIAYW (93 aa)) are alpha-2. The interval 218–231 (VPQNALPSDLLENA) is connecting peptide. The chain crosses the membrane as a helical span at residues 232 to 252 (LCGVAFALGVLGTIIGIVFFL). At 253–261 (CSQRPCSGD) the chain is on the cytoplasmic side.

It belongs to the MHC class II family. As to quaternary structure, heterodimer of an alpha chain (DMA) and a beta chain (DMB). Interacts with MHCII; this interaction mediates rapid selection of high-affinity peptides.

It localises to the late endosome membrane. The protein resides in the lysosome membrane. Its function is as follows. Plays a critical role in catalyzing the release of class II-associated invariant chain peptide (CLIP) from newly synthesized MHC class II molecules and freeing the peptide binding site for acquisition of antigenic peptides. This chain is Class II histocompatibility antigen, M alpha chain (H2-DMa), found in Mus musculus (Mouse).